The sequence spans 246 residues: Ribonuclease PH (246 aa).

Phosphate contacts are provided by residues R91 and 129–131 (GTR).

The protein belongs to the RNase PH family. In terms of assembly, homohexameric ring arranged as a trimer of dimers.

The catalysed reaction is tRNA(n+1) + phosphate = tRNA(n) + a ribonucleoside 5'-diphosphate. Phosphorolytic 3'-5' exoribonuclease that plays an important role in tRNA 3'-end maturation. Removes nucleotide residues following the 3'-CCA terminus of tRNAs; can also add nucleotides to the ends of RNA molecules by using nucleoside diphosphates as substrates, but this may not be physiologically important. Probably plays a role in initiation of 16S rRNA degradation (leading to ribosome degradation) during starvation. In Paraburkholderia phytofirmans (strain DSM 17436 / LMG 22146 / PsJN) (Burkholderia phytofirmans), this protein is Ribonuclease PH.